Consider the following 108-residue polypeptide: Large ribosomal subunit protein bL31B (108 aa).

Positions 85-108 (PKPETSVEEVLPKGKKKAPAKKKK) are disordered. Residues 97 to 108 (KGKKKAPAKKKK) show a composition bias toward basic residues.

It belongs to the bacterial ribosomal protein bL31 family. Type B subfamily. As to quaternary structure, part of the 50S ribosomal subunit.

In Chlamydia muridarum (strain MoPn / Nigg), this protein is Large ribosomal subunit protein bL31B.